The sequence spans 450 residues: Sensor histidine kinase EnvZ (450 aa).

Residues Met1–Thr15 are Cytoplasmic-facing. The chain crosses the membrane as a helical span at residues Leu16–Leu35. At Asn36–Ser158 the chain is on the periplasmic side. Positions Val71–Ala75 match the polyP-periplasmic motif motif. A helical membrane pass occupies residues Pro159–Ile179. One can recognise an HAMP domain in the interval Arg180–Asp232. Residues Arg180–Gly450 are Cytoplasmic-facing. A polyP-cytoplasmic motif motif is present at residues Ile201–Leu205. Residues Met223 to Arg289 form a cytoplasmic dimerization domain (CDD), when dimerized forms osmosensitive core region. Residues Gly240–Val440 form the Histidine kinase domain. Residues His243, Asn347–Tyr351, Asp373, Arg392–Gly393, and Thr402–Leu406 contribute to the ATP site. Phosphohistidine; by autocatalysis is present on His243.

In terms of assembly, homodimer. Interacts with MzrA. In terms of processing, autophosphorylated. Incubation of isolated EnvZ C-terminal fragment (residues 180-450) with increasing levels of NaCl or sucrose increases its autophosphorylation.

It is found in the cell inner membrane. The enzyme catalyses ATP + protein L-histidine = ADP + protein N-phospho-L-histidine.. Its activity is regulated as follows. Activity is modulated by MzrA. In the presence of 0.2 M NaCl, 2.0 mM sodium cholate (bile salts) decreases expression from the ompC promoter; how this is mediated is unknown. Autophosphorylation is inhibited by the angucycline antibiotic waldiomycin in a non-competitive manner; waldiomycin prevents dimerization of the cytoplasmic domain and autophosphorylation. Member of the two-component regulatory system EnvZ/OmpR involved in osmoregulation (particularly of genes ompF and ompC) as well as other genes. EnvZ functions as a membrane-associated protein kinase that phosphorylates OmpR in response to environmental signals; at low osmolarity OmpR activates ompF transcription, while at high osmolarity it represses ompF and activates ompC transcription. Also dephosphorylates OmpR in the presence of ATP. The cytoplasmic dimerization domain (CDD) forms an osmosensitive core; increasing osmolarity stabilizes this segment (possibly by its contraction), enhancing the autophosphorylation rate and consequently, downstream phosphotransfer to OmpR and signaling. Autophosphorylation is greater when full-length EnvZ is reconstituted in a lipid environment, lipid-mediated allostery impacts the kinase function of EnvZ. Involved in acid stress response; this requires EnvZ but not OmpR phosphorylation, and suggests that EnvZ senses cytoplasmic acidic pH. This is Sensor histidine kinase EnvZ (envZ) from Escherichia coli (strain K12).